Consider the following 587-residue polypeptide: MWPRNDVHMDDGSMTPEDQEPVTDNDMEYNDNGEESSYSNGSSSSYNADKLSSSRPLQHKLDLSASPSRNNDLNPRVEHLIALFKDLSSAEQMDAFTRLLQESNMTNIRQLRAIIEPHFQRDFLSCLPVELGMKILHNLTGYDLLKVAQVSKNWKLISEIDKIWKSLGVEEFKHHPDPTDRVTGAWQGTAIAAGVTIPDHIQPCDLNVHRFLKLQKFGDIFERAADKSRYLRADKIEKNWNANPIMGSAVLRGHEDHVITCMQIHDDVLVTGSDDNTLKVWCIDKGEVMYTLVGHTGGVWTSQISQCGRYIVSGSTDRTVKVWSTVDGSLLHTLQGHTSTVRCMAMAGSILVTGSRDTTLRVWDVESGRHLATLHGHHAAVRCVQFDGTTVVSGGYDFTVKIWNAHTGRCIRTLTGHNNRVYSLLFESERSIVCSGSLDTSIRVWDFTRPEGQECVALLQGHTSLTSGMQLRGNILVSCNADSHVRVWDIHEGTCVHMLSGHRSAITSLQWFGRNMVATSSDDGTVKLWDIERGALIRDLVTLDSGGNGGCIWRLCSTSTMLACAVGSRNNTEETKVILLDFDAVYP.

The span at 1–11 (MWPRNDVHMDD) shows a compositional bias: basic and acidic residues. Residues 1 to 53 (MWPRNDVHMDDGSMTPEDQEPVTDNDMEYNDNGEESSYSNGSSSSYNADKLSS) are disordered. Acidic residues predominate over residues 17–34 (EDQEPVTDNDMEYNDNGE). Residues 35–47 (ESSYSNGSSSSYN) show a composition bias toward low complexity. Positions 121 to 167 (RDFLSCLPVELGMKILHNLTGYDLLKVAQVSKNWKLISEIDKIWKSL) constitute an F-box domain. WD repeat units lie at residues 253 to 291 (GHEDHVITCMQIHDDVLVTGSDDNTLKVWCIDKGEVMYT), 294 to 333 (GHTGGVWTSQISQCGRYIVSGSTDRTVKVWSTVDGSLLHT), 336 to 373 (GHTSTVRCMAMAGSILVTGSRDTTLRVWDVESGRHLAT), 376 to 415 (GHHAAVRCVQFDGTTVVSGGYDFTVKIWNAHTGRCIRTLT), 416 to 455 (GHNNRVYSLLFESERSIVCSGSLDTSIRVWDFTRPEGQEC), 461 to 498 (GHTSLTSGMQLRGNILVSCNADSHVRVWDIHEGTCVHM), and 501 to 539 (GHRSAITSLQWFGRNMVATSSDDGTVKLWDIERGALIRD).

In terms of assembly, probable component of the SCF(sel-10) E3 ubiquitin-protein ligase complex which includes skr-1 and F-box domain-containing protein sel-10 as a substrate recognition component. Interacts with fem-1, fem-2, and fem-3. Interacts with the intracellular domain of glp-1 and sel-12. Interacts with lin-12. Interacts with skr-1. Interacts with zyg-1. In terms of tissue distribution, expressed in tail and head neurons.

It is found in the cell projection. The protein localises to the axon. Its subcellular location is the cytoplasm. Functionally, probable substrate recognition component of SCF (SKP1-CUL-F-box protein) E3 ubiquitin-protein ligase complex, which mediates the ubiquitination and subsequent proteasomal degradation of target proteins. Regulates synapse elimination in early development in the motor neuron HSNL. Cell autonomous negative regulator of lin-12/Notch-mediated signaling, with respect to lin-12 activity in cell fate decisions and tumorigenesis. May target the intracellular domains of lin-12/Notch proteins for ubiquitin-dependent degradation. Involved in sex determination by promoting female development. Potential regulator of presenilin. May have a role in egg laying. Regulates zyg-1 levels (possibly redundantly with lin-23) to control centrosome duplication during mitosis. Negatively regulates lin-45 activity and protein stability, probably by targeting it for ubiquitination and proteasomal degradation. This Caenorhabditis elegans protein is F-box/WD repeat-containing protein sel-10.